The following is a 362-amino-acid chain: MNIKSLLLGSAAALVAASGAQAADAIVAPEPEAVEYVRVCDAYGAGYFYIPGTETCLRVHGYVRYDVKGGDDVYSGTDRNGWDKSARFALRVSTGSETELGTLKTFTELRFNYAANNSGVDGKYGNETSSGTVMEFAYIQLGGLRVGIDESEFHTFTGYLGDVINDDVISAGSYRTGKISYTFTGGNGFSAVIALEQGGDNDGGYTGTTNYHIDGYMPDVVGGLKYAGGWGSIAGVVAYDSVIEEWAAKVRGDVNITDQFSVWLQGAYSSAATPDQNYGQWGGDWAVWGGLKYQATQKAAFNLQAAHDDWGKTAVTANVAYELVPGFTVTPEVSYTKFGGEWKNTVAEDNAWGGIVRFQRSF.

The signal sequence occupies residues 1-22 (MNIKSLLLGSAAALVAASGAQA).

Belongs to the alphaproteobacteria porin family. In terms of assembly, homotrimer.

It is found in the cell outer membrane. Forms passive diffusion pores that allow small molecular weight hydrophilic materials across the outer membrane. The sequence is that of Porin Omp2b (omp2b) from Brucella abortus (strain S19).